We begin with the raw amino-acid sequence, 142 residues long: Putative transcriptional regulatory protein Mevan_1098 (142 aa).

This sequence belongs to the Tfx family.

Its function is as follows. Putative transcriptional regulator. The polypeptide is Putative transcriptional regulatory protein Mevan_1098 (Methanococcus vannielii (strain ATCC 35089 / DSM 1224 / JCM 13029 / OCM 148 / SB)).